Consider the following 270-residue polypeptide: tRNA pseudouridine synthase A (270 aa).

Asp-51 acts as the Nucleophile in catalysis. Tyr-109 lines the substrate pocket.

This sequence belongs to the tRNA pseudouridine synthase TruA family. Homodimer.

The catalysed reaction is uridine(38/39/40) in tRNA = pseudouridine(38/39/40) in tRNA. Formation of pseudouridine at positions 38, 39 and 40 in the anticodon stem and loop of transfer RNAs. The sequence is that of tRNA pseudouridine synthase A from Burkholderia lata (strain ATCC 17760 / DSM 23089 / LMG 22485 / NCIMB 9086 / R18194 / 383).